The following is a 64-amino-acid chain: Large ribosomal subunit protein bL35 (64 aa).

Belongs to the bacterial ribosomal protein bL35 family.

This is Large ribosomal subunit protein bL35 from Levilactobacillus brevis (strain ATCC 367 / BCRC 12310 / CIP 105137 / JCM 1170 / LMG 11437 / NCIMB 947 / NCTC 947) (Lactobacillus brevis).